The primary structure comprises 69 residues: Pleurain-A1 (69 aa).

Residues Met1–Ser18 form the signal peptide. A propeptide spanning residues Ile19–Arg43 is cleaved from the precursor. Cys63 and Cys69 form a disulfide bridge.

As to expression, expressed by the skin glands.

The protein localises to the secreted. Antimicrobial peptide. Has activity against the Gram-positive bacterium S.aureus ATCC2592 (MIC=15 ug/ml), the Gram-negative bacteria E.coli ATCC25922 (MIC=60 ug/ml), B.dysenteriae (MIC=120 ug/ml), H.pylori NTCT11637 (MIC=30 ug/ml), and the fungus C.albicans ATCC2002 (MIC=30 ug/ml). Has little hemolytic activity on rabbit red blood cells. The sequence is that of Pleurain-A1 from Nidirana pleuraden (Yunnan pond frog).